We begin with the raw amino-acid sequence, 295 residues long: Acetyl-coenzyme A carboxylase carboxyl transferase subunit beta (295 aa).

A disordered region spans residues 1–20; that stretch reads MSWLSKLMPSGIRTENTPAK. The CoA carboxyltransferase N-terminal domain occupies 28–295; sequence LWEKCSNCGS…QPHPQDADAA (268 aa). Cys-32, Cys-35, Cys-51, and Cys-54 together coordinate Zn(2+). Residues 32-54 form a C4-type zinc finger; the sequence is CSNCGSALYGPELEENLEVCPKC.

The protein belongs to the AccD/PCCB family. Acetyl-CoA carboxylase is a heterohexamer composed of biotin carboxyl carrier protein (AccB), biotin carboxylase (AccC) and two subunits each of ACCase subunit alpha (AccA) and ACCase subunit beta (AccD). The cofactor is Zn(2+).

The protein resides in the cytoplasm. It carries out the reaction N(6)-carboxybiotinyl-L-lysyl-[protein] + acetyl-CoA = N(6)-biotinyl-L-lysyl-[protein] + malonyl-CoA. It functions in the pathway lipid metabolism; malonyl-CoA biosynthesis; malonyl-CoA from acetyl-CoA: step 1/1. Component of the acetyl coenzyme A carboxylase (ACC) complex. Biotin carboxylase (BC) catalyzes the carboxylation of biotin on its carrier protein (BCCP) and then the CO(2) group is transferred by the transcarboxylase to acetyl-CoA to form malonyl-CoA. The polypeptide is Acetyl-coenzyme A carboxylase carboxyl transferase subunit beta (Xanthomonas campestris pv. campestris (strain 8004)).